Here is a 165-residue protein sequence, read N- to C-terminus: SsrA-binding protein (165 aa).

It belongs to the SmpB family.

The protein localises to the cytoplasm. Required for rescue of stalled ribosomes mediated by trans-translation. Binds to transfer-messenger RNA (tmRNA), required for stable association of tmRNA with ribosomes. tmRNA and SmpB together mimic tRNA shape, replacing the anticodon stem-loop with SmpB. tmRNA is encoded by the ssrA gene; the 2 termini fold to resemble tRNA(Ala) and it encodes a 'tag peptide', a short internal open reading frame. During trans-translation Ala-aminoacylated tmRNA acts like a tRNA, entering the A-site of stalled ribosomes, displacing the stalled mRNA. The ribosome then switches to translate the ORF on the tmRNA; the nascent peptide is terminated with the 'tag peptide' encoded by the tmRNA and targeted for degradation. The ribosome is freed to recommence translation, which seems to be the essential function of trans-translation. The protein is SsrA-binding protein of Prochlorococcus marinus (strain MIT 9515).